Here is a 701-residue protein sequence, read N- to C-terminus: SH3 domain-binding protein 1 (701 aa).

Basic residues predominate over residues 1–10; that stretch reads MMKRQLHRMR. Disordered regions lie at residues 1–23 and 160–182; these read MMKR…RTPE and SQAT…HSHT. Positions 1–275 are interaction with CGNL1; it reads MMKRQLHRMR…TATHFPRVYG (275 aa). The BAR domain maps to 17–262; that stretch reads SLGRTPETAE…RENHGQADHS (246 aa). A phosphoserine mark is found at serine 175, serine 241, serine 262, and serine 264. The Rho-GAP domain occupies 276-469; the sequence is VSLATHLQEL…ALIQSADTLF (194 aa). The tract at residues 470 to 701 is interaction with CD2AP; it reads PGDINFNVSG…RPRSLASETN (232 aa). The tract at residues 496 to 701 is disordered; the sequence is SEELPSTAVP…RPRSLASETN (206 aa). Over residues 508 to 522 the composition is skewed to pro residues; it reads ATTPAPAPAPAPAPA. Residues serine 544 and serine 550 each carry the phosphoserine modification. Pro residues-rich tracts occupy residues 570–579 and 587–596; these read PARPTMPPPQ and PPAPPLPPGS. Threonine 601 is modified (phosphothreonine). The SH3-binding signature appears at 616–625; sequence APTVPPPLPP. Composition is skewed to pro residues over residues 618 to 630 and 641 to 652; these read TVPP…PPQP and SPSPASPGPASP. Position 626 is a phosphothreonine (threonine 626). Residue serine 653 is modified to Phosphoserine. Residues 666–677 show a composition bias toward low complexity; the sequence is GAATAEGGAPEA. The span at 682-692 shows a compositional bias: pro residues; the sequence is PTPPAIPPQPR.

In terms of assembly, interacts with RAC1. Interacts with the exocyst via EXOC4 and EXOC8; required for the localization of both SH3BP1 and the exocyst to the leading edge of migrating cells. Interacts with CD2AP and CGNL1; probably part of a complex at cell junctions. Interacts with CAPZA1; recruits CAPZA1 to forming cell junctions. May interact with AFDN. Interacts with PLXND1; they dissociate upon SEMA3E binding to PLXND1 allowing SH3BP1 to transduce downstream signal through RAC1 inactivation. Interacts with ABL1, GRB2 and SRC (via SH3 domain).

It is found in the cell projection. The protein resides in the cell junction. It localises to the tight junction. Its subcellular location is the adherens junction. The protein localises to the phagocytic cup. It is found in the nucleus. The protein resides in the cytoplasm. It localises to the cytosol. Its function is as follows. GTPase activating protein (GAP) which specifically converts GTP-bound Rho-type GTPases including RAC1 and CDC42 in their inactive GDP-bound form. By specifically inactivating RAC1 at the leading edge of migrating cells, it regulates the spatiotemporal organization of cell protrusions which is important for proper cell migration. Also negatively regulates CDC42 in the process of actin remodeling and the formation of epithelial cell junctions. Through its GAP activity toward RAC1 and/or CDC42 plays a specific role in phagocytosis of large particles. Specifically recruited by a PI3 kinase/PI3K-dependent mechanism to sites of large particles engagement, inactivates RAC1 and/or CDC42 allowing the reorganization of the underlying actin cytoskeleton required for engulfment. It also plays a role in angiogenesis and the process of repulsive guidance as part of a semaphorin-plexin signaling pathway. Following the binding of PLXND1 to extracellular SEMA3E it dissociates from PLXND1 and inactivates RAC1, inducing the intracellular reorganization of the actin cytoskeleton and the collapse of cells. This is SH3 domain-binding protein 1 from Homo sapiens (Human).